A 297-amino-acid chain; its full sequence is Coiled-coil domain-containing protein 196 (297 aa).

The stretch at 83–117 (ESSVMELLKEAEEMKQNLERKNKMLRKEMEMLWNK) forms a coiled coil. Residues 122-161 (EELSDQQKAPQTKNKADLQDGKAPKSPSSPRKTESELEKS) are disordered. Basic and acidic residues-rich tracts occupy residues 135–144 (NKADLQDGKA) and 152–161 (RKTESELEKS).

The sequence is that of Coiled-coil domain-containing protein 196 from Homo sapiens (Human).